The primary structure comprises 424 residues: Histidine--tRNA ligase (424 aa).

It belongs to the class-II aminoacyl-tRNA synthetase family. In terms of assembly, homodimer.

It localises to the cytoplasm. It carries out the reaction tRNA(His) + L-histidine + ATP = L-histidyl-tRNA(His) + AMP + diphosphate + H(+). In Escherichia coli (strain 55989 / EAEC), this protein is Histidine--tRNA ligase.